A 376-amino-acid polypeptide reads, in one-letter code: TelA-like protein SE_1089 (376 aa).

Belongs to the TelA family.

The polypeptide is TelA-like protein SE_1089 (Staphylococcus epidermidis (strain ATCC 12228 / FDA PCI 1200)).